The primary structure comprises 662 residues: Sodium/glucose cotransporter 1 (662 aa).

The Extracellular portion of the chain corresponds to M1–R24. The chain crosses the membrane as a helical span at residues N25–M47. Topologically, residues F48 to V66 are cytoplasmic. The chain crosses the membrane as a helical span at residues W67–T90. Residues G91–G95 are Extracellular-facing. The helical transmembrane segment at I96–V117 threads the bilayer. At P118–K139 the chain is on the cytoplasmic side. A helical membrane pass occupies residues R140–I169. Residues Q170–D176 lie on the Extracellular side of the membrane. Residues I177 to I193 form a helical membrane-spanning segment. Over T194–Y202 the chain is Cytoplasmic. A helical transmembrane segment spans residues T203 to F221. Topologically, residues A222–P275 are extracellular. A glycan (N-linked (GlcNAc...) asparagine) is linked at N248. 5 disulfides stabilise this stretch: C255–C511, C255–C608, C345–C351, C355–C361, and C517–C522. A helical transmembrane segment spans residues W276 to Q295. At V296–H309 the chain is on the cytoplasmic side. Residues V310–M331 form a helical membrane-spanning segment. At G332–P375 the chain is on the extracellular side. Residues N376–T406 traverse the membrane as a helical segment. The Cytoplasmic segment spans residues M407–L422. The chain crosses the membrane as a helical span at residues M423–V444. Residues Q445–Q451 lie on the Extracellular side of the membrane. The helical transmembrane segment at L452–W477 threads the bilayer. A D-glucose-binding site is contributed by Q457. Topologically, residues K478–N481 are cytoplasmic. The helical transmembrane segment at E482–F504 threads the bilayer. Residues A505–H525 are Extracellular-facing. Residues Y526–F547 form a helical membrane-spanning segment. Residues T548–V642 lie on the Cytoplasmic side of the membrane. Residues V643 to Y660 traverse the membrane as a helical segment. At F661–A662 the chain is on the extracellular side.

Belongs to the sodium:solute symporter (SSF) (TC 2.A.21) family. Post-translationally, N-glycosylation is not necessary for the cotransporter function. As to expression, found predominantly in intestine, renal cortex and in outer renal medulla.

The protein resides in the apical cell membrane. It carries out the reaction D-glucose(out) + 2 Na(+)(out) = D-glucose(in) + 2 Na(+)(in). It catalyses the reaction D-galactose(out) + 2 Na(+)(out) = D-galactose(in) + 2 Na(+)(in). Its activity is regulated as follows. Enhanced by the interaction with PDZK1IP1/MAP17; but unlike SLC5A2/SGLT2, PDZK1IP1 is not essential for SLC5A1 transporter activity. Possibly modulated by cholesterol binding. In terms of biological role, electrogenic Na(+)-coupled sugar symporter that actively transports D-glucose or D-galactose at the plasma membrane, with a Na(+) to sugar coupling ratio of 2:1. Transporter activity is driven by a transmembrane Na(+) electrochemical gradient set by the Na(+)/K(+) pump. Has a primary role in the transport of dietary monosaccharides from enterocytes to blood. Responsible for the absorption of D-glucose or D-galactose across the apical brush-border membrane of enterocytes, whereas basolateral exit is provided by GLUT2. Additionally, functions as a D-glucose sensor in enteroendocrine cells, triggering the secretion of the incretins GCG and GIP that control food intake and energy homeostasis. Together with SGLT2, functions in reabsorption of D-glucose from glomerular filtrate, playing a nonredundant role in the S3 segment of the proximal tubules. Transports D-glucose into endometrial epithelial cells, controlling glycogen synthesis and nutritional support for the embryo as well as the decidual transformation of endometrium prior to conception. Acts as a water channel enabling passive water transport in response to the osmotic gradient created upon sugar and Na(+) uptake. Has high water conductivity comparable to aquaporins and therefore is expected to play an important role in transepithelial water permeability, especially in the small intestine. The sequence is that of Sodium/glucose cotransporter 1 (SLC5A1) from Oryctolagus cuniculus (Rabbit).